The primary structure comprises 474 residues: Glutathione synthetase (474 aa).

N-acetylalanine is present on Ala-2. Arg-125 is a binding site for substrate. Glu-144 contributes to the ATP binding site. Residues Glu-144 and Asn-146 each contribute to the Mg(2+) site. Substrate is bound by residues 148–151 (ISAS), 214–216 (ERN), Gln-220, and 267–270 (RDGY). ATP-binding positions include Lys-305, 364-373 (KPQREGGGNN), Tyr-375, and 398-401 (MEKI). Glu-368 provides a ligand contact to Mg(2+). Position 415 is a phosphoserine (Ser-415). Glu-425 contributes to the ATP binding site. Arg-450 contributes to the substrate binding site. ATP contacts are provided by Lys-452 and Asp-458. 461-462 (VA) provides a ligand contact to substrate.

Belongs to the eukaryotic GSH synthase family. Homodimer. The cofactor is Mg(2+).

It catalyses the reaction gamma-L-glutamyl-L-cysteine + glycine + ATP = glutathione + ADP + phosphate + H(+). The enzyme catalyses gamma-L-glutamyl-(2S)-2-aminobutanoate + glycine + ATP = ophthalmate + ADP + phosphate + H(+). It functions in the pathway sulfur metabolism; glutathione biosynthesis; glutathione from L-cysteine and L-glutamate: step 2/2. Its function is as follows. Catalyzes the production of glutathione from gamma-glutamylcysteine and glycine in an ATP-dependent manner. Glutathione (gamma-glutamylcysteinylglycine, GSH) is the most abundant intracellular thiol in living aerobic cells and is required for numerous processes including the protection of cells against oxidative damage, amino acid transport, the detoxification of foreign compounds, the maintenance of protein sulfhydryl groups in a reduced state and acts as a cofactor for a number of enzymes. Participates in ophthalmate biosynthesis in hepatocytes. In Homo sapiens (Human), this protein is Glutathione synthetase.